A 132-amino-acid chain; its full sequence is Replication enhancer protein (132 aa).

Belongs to the geminiviridae replication enhancer protein family. In terms of assembly, homooligomer. Interacts with the replication-associated protein (REP). Interacts with host proliferating cell nuclear antigen (PCNA). Interacts with host retinoblastoma-related protein 1 (RBR1), and may thereby deregulate the host cell cycle. Oligomerization and interaction with PCNA are necessary for optimal replication enhancement.

In terms of biological role, increases viral DNA accumulation. Enhances infectivity and symptom expression. The protein is Replication enhancer protein of Solanum lycopersicum (Tomato).